The primary structure comprises 137 residues: Basic phospholipase A2 homolog 4a (137 aa).

The N-terminal stretch at 1 to 16 (MRTLWIVTVLLVGVEG) is a signal peptide. 7 cysteine pairs are disulfide-bonded: cysteine 42-cysteine 131, cysteine 44-cysteine 60, cysteine 59-cysteine 111, cysteine 65-cysteine 137, cysteine 66-cysteine 104, cysteine 73-cysteine 97, and cysteine 91-cysteine 102. The segment at 121–133 (KKYKIYPKFFCKK) is important for membrane-damaging activities in eukaryotes and bacteria; heparin-binding.

It belongs to the phospholipase A2 family. Group II subfamily. K49 sub-subfamily. Homodimer; non-covalently linked. As to expression, expressed by the venom gland.

The protein resides in the secreted. Its function is as follows. Snake venom phospholipase A2 homolog that lacks enzymatic activity. Is myotoxic and displays edema-inducing activities. A model of myotoxic mechanism has been proposed: an apo Lys49-PLA2 is activated by the entrance of a hydrophobic molecule (e.g. fatty acid) at the hydrophobic channel of the protein leading to a reorientation of a monomer. This reorientation causes a transition between 'inactive' to 'active' states, causing alignment of C-terminal and membrane-docking sites (MDoS) side-by-side and putting the membrane-disruption sites (MDiS) in the same plane, exposed to solvent and in a symmetric position for both monomers. The MDoS region stabilizes the toxin on membrane by the interaction of charged residues with phospholipid head groups. Subsequently, the MDiS region destabilizes the membrane with penetration of hydrophobic residues. This insertion causes a disorganization of the membrane, allowing an uncontrolled influx of ions (i.e. calcium and sodium), and eventually triggering irreversible intracellular alterations and cell death. This Bothrops asper (Terciopelo) protein is Basic phospholipase A2 homolog 4a.